Here is a 209-residue protein sequence, read N- to C-terminus: MICOS complex subunit mic19 (209 aa).

Coiled-coil stretches lie at residues 48–86 and 127–156; these read LELE…DTGS and EVAA…GRKK.

Belongs to the MICOS complex subunit Mic19 family. As to quaternary structure, component of the mitochondrial contact site and cristae organizing system (MICOS) complex.

The protein localises to the mitochondrion inner membrane. Component of the MICOS complex, a large protein complex of the mitochondrial inner membrane that plays crucial roles in the maintenance of crista junctions, inner membrane architecture, and formation of contact sites to the outer membrane. Involved in osmoadaptation. This is MICOS complex subunit mic19 from Emericella nidulans (strain FGSC A4 / ATCC 38163 / CBS 112.46 / NRRL 194 / M139) (Aspergillus nidulans).